The primary structure comprises 211 residues: Thiamine-phosphate synthase (211 aa).

4-amino-2-methyl-5-(diphosphooxymethyl)pyrimidine-binding positions include 37-41 (QLRIK) and Asn69. Asp70 and Asp89 together coordinate Mg(2+). 4-amino-2-methyl-5-(diphosphooxymethyl)pyrimidine is bound at residue Ser108. 134 to 136 (TQT) contacts 2-[(2R,5Z)-2-carboxy-4-methylthiazol-5(2H)-ylidene]ethyl phosphate. Lys137 is a binding site for 4-amino-2-methyl-5-(diphosphooxymethyl)pyrimidine. 2-[(2R,5Z)-2-carboxy-4-methylthiazol-5(2H)-ylidene]ethyl phosphate-binding positions include Gly166 and 186-187 (VS).

This sequence belongs to the thiamine-phosphate synthase family. Requires Mg(2+) as cofactor.

It catalyses the reaction 2-[(2R,5Z)-2-carboxy-4-methylthiazol-5(2H)-ylidene]ethyl phosphate + 4-amino-2-methyl-5-(diphosphooxymethyl)pyrimidine + 2 H(+) = thiamine phosphate + CO2 + diphosphate. The enzyme catalyses 2-(2-carboxy-4-methylthiazol-5-yl)ethyl phosphate + 4-amino-2-methyl-5-(diphosphooxymethyl)pyrimidine + 2 H(+) = thiamine phosphate + CO2 + diphosphate. It carries out the reaction 4-methyl-5-(2-phosphooxyethyl)-thiazole + 4-amino-2-methyl-5-(diphosphooxymethyl)pyrimidine + H(+) = thiamine phosphate + diphosphate. It functions in the pathway cofactor biosynthesis; thiamine diphosphate biosynthesis; thiamine phosphate from 4-amino-2-methyl-5-diphosphomethylpyrimidine and 4-methyl-5-(2-phosphoethyl)-thiazole: step 1/1. Condenses 4-methyl-5-(beta-hydroxyethyl)thiazole monophosphate (THZ-P) and 2-methyl-4-amino-5-hydroxymethyl pyrimidine pyrophosphate (HMP-PP) to form thiamine monophosphate (TMP). The protein is Thiamine-phosphate synthase of Salmonella choleraesuis (strain SC-B67).